A 250-amino-acid chain; its full sequence is MKICLIDETGAGDGALSVLAARWGLEHDEDNLMALVLTPEHLELRKRDEPKLGGIFVDFVGGAMAHRRKFGGGRGEAVAKAVGIKGDYLPDVVDATAGLGRDAFVLASVGCRVRMLERNPVVAALLDDGLARGYADAEIGGWLQERLQLIHASSLTALSDITPRPQVVCLDPMFPHKQKSALVKKEMRVFQSLVGPDLDADGLLEPARLLATKRVVVKRPDYAPPLANVATPNAVVTKGHRFDIYAGTPV.

S-adenosyl-L-methionine-binding positions include 101-102 (RD), 117-118 (ER), 153-154 (SS), and D171.

The protein belongs to the methyltransferase superfamily. RsmJ family.

It localises to the cytoplasm. The catalysed reaction is guanosine(1516) in 16S rRNA + S-adenosyl-L-methionine = N(2)-methylguanosine(1516) in 16S rRNA + S-adenosyl-L-homocysteine + H(+). In terms of biological role, specifically methylates the guanosine in position 1516 of 16S rRNA. The sequence is that of Ribosomal RNA small subunit methyltransferase J from Escherichia coli (strain UTI89 / UPEC).